We begin with the raw amino-acid sequence, 81 residues long: Insulin (81 aa).

3 disulfides stabilise this stretch: cysteine 7-cysteine 67, cysteine 19-cysteine 80, and cysteine 66-cysteine 71. The propeptide at 33–58 (DVEQPLVNGPLHGEVGELPFQHEEYQ) is c peptide.

It belongs to the insulin family. Heterodimer of a B chain and an A chain linked by two disulfide bonds.

The protein localises to the secreted. Its function is as follows. Insulin decreases blood glucose concentration. It increases cell permeability to monosaccharides, amino acids and fatty acids. It accelerates glycolysis, the pentose phosphate cycle, and glycogen synthesis in liver. The protein is Insulin (INS) of Anas platyrhynchos (Mallard).